We begin with the raw amino-acid sequence, 281 residues long: Hexaprenyl pyrophosphate synthase (281 aa).

Isopentenyl diphosphate-binding residues include Lys-42, Arg-45, and His-74. Mg(2+) contacts are provided by Asp-81 and Asp-85. Arg-91 is an isopentenyl diphosphate binding site.

This sequence belongs to the FPP/GGPP synthase family. In terms of assembly, homodimer. The cofactor is Mg(2+).

The enzyme catalyses 2 isopentenyl diphosphate + (2E,6E,10E)-geranylgeranyl diphosphate = all-trans-hexaprenyl diphosphate + 2 diphosphate. In terms of biological role, catalyzes consecutive E-type condensation of two isopentenyl pyrophosphate (IPP) molecules with an allylic substrate such as geranylgeranyl diphosphate (GGPP), farnesyl diphosphate (FPP) or geranyl diphosphate (GPP) to yield the medium-chain product trans-C30-hexaprenyl pyrophosphate (HexPP). GGPP is the physiological substrate. In Saccharolobus solfataricus (strain ATCC 35092 / DSM 1617 / JCM 11322 / P2) (Sulfolobus solfataricus), this protein is Hexaprenyl pyrophosphate synthase (gdS-2).